Here is a 162-residue protein sequence, read N- to C-terminus: Beta-carotene hydroxylase (162 aa).

The region spanning 8 to 135 is the Fatty acid hydroxylase domain; it reads VATVLVMELT…GRDHCVSFGF (128 aa).

This sequence belongs to the sterol desaturase family.

The enzyme catalyses all-trans-beta-carotene + 4 reduced [2Fe-2S]-[ferredoxin] + 2 O2 + 4 H(+) = all-trans-zeaxanthin + 4 oxidized [2Fe-2S]-[ferredoxin] + 2 H2O. It functions in the pathway carotenoid biosynthesis; astaxanthin biosynthesis. Catalyzes the hydroxylation reaction from beta-carotene to zeaxanthin via beta-cryptoxanthin. The protein is Beta-carotene hydroxylase (crtZ) of Paracoccus sp. (strain N81106 / MBIC 01143) (Agrobacterium aurantiacum).